We begin with the raw amino-acid sequence, 448 residues long: Divalent metal cation transporter MntH (448 aa).

Residues Met1–Lys10 show a composition bias toward basic and acidic residues. The tract at residues Met1–Pro20 is disordered. A run of 11 helical transmembrane segments spans residues Leu41–Trp61, Ser69–Leu89, Gly117–Ile137, Phe147–Phe167, Ile176–Val196, Ile215–Pro235, Phe270–Phe290, Leu307–Ala327, Val363–Glu383, Leu384–Val404, and Ile424–Thr444.

It belongs to the NRAMP family.

It localises to the cell membrane. In terms of biological role, h(+)-stimulated, divalent metal cation uptake system. The protein is Divalent metal cation transporter MntH of Listeria monocytogenes serotype 4b (strain CLIP80459).